The sequence spans 419 residues: Monooxygenase CTB7 (419 aa).

It belongs to the aromatic-ring hydroxylase family. KMO subfamily.

It functions in the pathway mycotoxin biosynthesis. Monooxygenase; part of the gene cluster that mediates the biosynthesis of cercosporin, a light-activated, non-host-selective toxin. The perylenequinone chromophore of cercosporin absorbs light energy to attain an electronically-activated triplet state and produces active oxygen species such as the hydroxyl radical, superoxide, hydrogen peroxide or singlet oxygen upon reaction with oxygen molecules. These reactive oxygen species cause damage to various cellular components including lipids, proteins and nucleic acids. The first step of cercosporin biosynthesis is performed by the polyketide synthase CTB1 which catalyzes the formation of nor-toralactone. The starter unit acyltransferase (SAT) domain of CTB1 initiates polyketide extension by the selective utilization of acetyl-CoA, which is elongated to the heptaketide in the beta-ketoacyl synthase (KS) domain by successive condensations with six malonyl units introduced by the malonyl acyltransferase (MAT) domain. The product template (PT) domain catalyzes C4-C9 and C2-C11 aldol cyclizations and dehydrations to a trihydroxynaphthalene, which is thought to be delivered to the thioesterase (TE) domain for product release. The bifunctional enzyme CTB3 then methylates nor-toralactone to toralactone before conducting an unusual oxidative aromatic ring opening. The O-methyltransferase CTB2 further methylates the nascent OH-6 of the CBT3 product, blocking further oxidation at this site before the reductase CTB6 reduces the 2-oxopropyl ketone at position C7, giving naphthalene. The FAD-dependent monooxygenase CTB5 in concert with the multicopper oxidase CTB12 are responsible for homodimerization of naphthalene with CTB7 installing the dioxepine moiety, finally producing cercosporin. The fasciclin domain-containing protein CTB11 might act with CTB5 and CTB12 whereas the roles of CTB9 and CTB10 have still to be elucidated. The protein is Monooxygenase CTB7 of Cercospora beticola (Sugarbeet leaf spot fungus).